Consider the following 503-residue polypeptide: Aromatase (503 aa).

The next 3 helical transmembrane spans lie at 19–39, 51–71, and 303–323; these read EVMPVATMPILLLTGFLLLVW, GYCMGIGPLISHCRFLWMGIG, and MLIAAPDTMSVSVFFMLFLIA. Positions 309 and 374 each coordinate substrate. Residue Cys437 participates in heme binding.

It belongs to the cytochrome P450 family. Heme serves as cofactor.

It is found in the endoplasmic reticulum membrane. It localises to the microsome membrane. The catalysed reaction is testosterone + 3 reduced [NADPH--hemoprotein reductase] + 3 O2 = 17beta-estradiol + formate + 3 oxidized [NADPH--hemoprotein reductase] + 4 H2O + 4 H(+). It catalyses the reaction androst-4-ene-3,17-dione + 3 reduced [NADPH--hemoprotein reductase] + 3 O2 = estrone + formate + 3 oxidized [NADPH--hemoprotein reductase] + 4 H2O + 4 H(+). It carries out the reaction androst-4-ene-3,17-dione + reduced [NADPH--hemoprotein reductase] + O2 = 19-hydroxyandrost-4-ene-3,17-dione + oxidized [NADPH--hemoprotein reductase] + H2O + H(+). The enzyme catalyses 19-hydroxyandrost-4-ene-3,17-dione + reduced [NADPH--hemoprotein reductase] + O2 = 19-oxo-androst-4-ene-3,17-dione + oxidized [NADPH--hemoprotein reductase] + 2 H2O + H(+). The catalysed reaction is 19-oxo-androst-4-ene-3,17-dione + reduced [NADPH--hemoprotein reductase] + O2 = estrone + formate + oxidized [NADPH--hemoprotein reductase] + H2O + 2 H(+). It catalyses the reaction estrone + reduced [NADPH--hemoprotein reductase] + O2 = 2-hydroxyestrone + oxidized [NADPH--hemoprotein reductase] + H2O + H(+). It carries out the reaction 17beta-hydroxy-5alpha-androstan-3-one + reduced [NADPH--hemoprotein reductase] + O2 = 17beta,19-dihydroxy-3-oxo-5alpha-androstanone + oxidized [NADPH--hemoprotein reductase] + H2O + H(+). The enzyme catalyses 17beta,19-dihydroxy-3-oxo-5alpha-androstanone + reduced [NADPH--hemoprotein reductase] + O2 = 17beta-hydroxy-3,19-dioxo-5alpha-androstanone + oxidized [NADPH--hemoprotein reductase] + 2 H2O + H(+). The catalysed reaction is 17beta-hydroxy-3,19-dioxo-5alpha-androstanone + reduced [NADPH--hemoprotein reductase] + O2 = 17beta-hydroxy-3-oxo-19-nor-5alpha-androst-1-ene + formate + oxidized [NADPH--hemoprotein reductase] + H2O + 2 H(+). It functions in the pathway steroid hormone biosynthesis. A cytochrome P450 monooxygenase that catalyzes the conversion of C19 androgens, androst-4-ene-3,17-dione (androstenedione) and testosterone to the C18 estrogens, estrone and estradiol, respectively. Catalyzes three successive oxidations of C19 androgens: two conventional oxidations at C19 yielding 19-hydroxy and 19-oxo/19-aldehyde derivatives, followed by a third oxidative aromatization step that involves C1-beta hydrogen abstraction combined with cleavage of the C10-C19 bond to yield a phenolic A ring and formic acid. Alternatively, the third oxidative reaction yields a 19-norsteroid and formic acid. Converts dihydrotestosterone to delta1,10-dehydro 19-nordihydrotestosterone and may play a role in homeostasis of this potent androgen. Also displays 2-hydroxylase activity toward estrone. Mechanistically, uses molecular oxygen inserting one oxygen atom into a substrate, and reducing the second into a water molecule, with two electrons provided by NADPH via cytochrome P450 reductase (CPR; NADPH-ferrihemoprotein reductase). The chain is Aromatase (CYP19A1) from Canis lupus familiaris (Dog).